Consider the following 349-residue polypeptide: Tribbles homolog 3 (349 aa).

An interaction with DDIT3/CHOP region spans residues 1–122 (MRATSLAASA…QHVARPTEVL (122 aa)). The disordered stretch occupies residues 35 to 57 (VRDEPEPGPTPSLPPASDLSPAV). In terms of domain architecture, Protein kinase spans 63–310 (LGPYILLERE…ALGILLHPWL (248 aa)). The interval 317–349 (VSPPRSDRREMDQVVPDGPQLEEAEEGEVGLYG) is disordered. Residues 336–349 (QLEEAEEGEVGLYG) are compositionally biased toward acidic residues.

Belongs to the protein kinase superfamily. CAMK Ser/Thr protein kinase family. Tribbles subfamily. Interacts with AKT1, AKT2, MAP2K1 and MAP2K7. Interacts with ATF4. Interacts with DDIT3/CHOP and inhibits its interaction with EP300/P300. Interacts with APOBEC3C. Interacts (via N-terminus) with APOBEC3A. Interacts with RELA. Detected only in the lung. Not detected in the heart, brain, spleen, liver, skeletal muscle, kidney and testis.

It is found in the nucleus. Inactive protein kinase which acts as a regulator of the integrated stress response (ISR), a process for adaptation to various stress. Inhibits the transcriptional activity of DDIT3/CHOP and is involved in DDIT3/CHOP-dependent cell death during ER stress. May play a role in programmed neuronal cell death but does not appear to affect non-neuronal cells. Acts as a negative feedback regulator of the ATF4-dependent transcription during the ISR: while TRIB3 expression is promoted by ATF4, TRIB3 protein interacts with ATF4 and inhibits ATF4 transcription activity. Disrupts insulin signaling by binding directly to Akt kinases and blocking their activation. May bind directly to and mask the 'Thr-308' phosphorylation site in AKT1. Interacts with the NF-kappa-B transactivator p65 RELA and inhibits its phosphorylation and thus its transcriptional activation activity. Interacts with MAPK kinases and regulates activation of MAP kinases. Can inhibit APOBEC3A editing of nuclear DNA. This chain is Tribbles homolog 3 (Trib3), found in Rattus norvegicus (Rat).